We begin with the raw amino-acid sequence, 386 residues long: Demethylsterigmatocystin 6-O-methyltransferase (386 aa).

Position 137-150 (137-150) interacts with substrate; that stretch reads FDISGPCTQILPDF. Residues 177-197 form a substrate binding region; sequence MFEWMPQHPKHMESLGHLMAL. S-adenosyl-L-methionine contacts are provided by residues 228 to 229, D253, 273 to 274, and R289; these read GG and NF. Residue H293 is the Proton acceptor of the active site.

This sequence belongs to the class I-like SAM-binding methyltransferase superfamily. Cation-independent O-methyltransferase family. COMT subfamily.

It carries out the reaction 6-demethylsterigmatocystin + S-adenosyl-L-methionine = sterigmatocystin + S-adenosyl-L-homocysteine + H(+). The protein operates within mycotoxin biosynthesis; aflatoxin biosynthesis. In terms of biological role, catalyzes both the conversion of demethylsterigmatocystin (DMST) to sterigmatocystin and the conversion of dihydrodemethylsterigmatocystin to dihydrosterigmatocystin (DHDMST) during aflatoxin biosynthesis. This chain is Demethylsterigmatocystin 6-O-methyltransferase (omtB), found in Aspergillus flavus (strain ATCC 200026 / FGSC A1120 / IAM 13836 / NRRL 3357 / JCM 12722 / SRRC 167).